The sequence spans 230 residues: Exosome complex component Rrp4 (230 aa).

An S1 motif domain is found at 60-129 (NDKVIGKVID…EIKESWLSLK (70 aa)). Residues 137–195 (EEGSIIYIKAPKVPRVIGKAGNMINMIKSETNTKIIVGQNGLIWIDGEPENVDLAINAI) enclose the KH domain.

The protein belongs to the RRP4 family. As to quaternary structure, component of the archaeal exosome complex. Forms a trimer of Rrp4 and/or Csl4 subunits. The trimer associates with a hexameric ring-like arrangement composed of 3 Rrp41-Rrp42 heterodimers.

It localises to the cytoplasm. Non-catalytic component of the exosome, which is a complex involved in RNA degradation. Increases the RNA binding and the efficiency of RNA degradation. Confers strong poly(A) specificity to the exosome. This chain is Exosome complex component Rrp4, found in Picrophilus torridus (strain ATCC 700027 / DSM 9790 / JCM 10055 / NBRC 100828 / KAW 2/3).